We begin with the raw amino-acid sequence, 1134 residues long: Isoleucine--tRNA ligase (1134 aa).

Positions 52-62 (PFANGLPHYGH) match the 'HIGH' region motif. The short motif at 656–660 (KLSKR) is the 'KMSKS' region element. Lysine 659 provides a ligand contact to ATP.

The protein belongs to the class-I aminoacyl-tRNA synthetase family. IleS type 2 subfamily. In terms of assembly, monomer. Zn(2+) serves as cofactor.

It localises to the cytoplasm. The catalysed reaction is tRNA(Ile) + L-isoleucine + ATP = L-isoleucyl-tRNA(Ile) + AMP + diphosphate. Catalyzes the attachment of isoleucine to tRNA(Ile). As IleRS can inadvertently accommodate and process structurally similar amino acids such as valine, to avoid such errors it has two additional distinct tRNA(Ile)-dependent editing activities. One activity is designated as 'pretransfer' editing and involves the hydrolysis of activated Val-AMP. The other activity is designated 'posttransfer' editing and involves deacylation of mischarged Val-tRNA(Ile). This is Isoleucine--tRNA ligase from Wolbachia sp. subsp. Brugia malayi (strain TRS).